Consider the following 299-residue polypeptide: MLDNTRLRIAMQKSGRLSDESRELLARCGIKINLQQQRLIAFAENMPIDILRVRDDDIPGLVMDGVVDLGIIGENVLEEELLTRRAQGEDPRYKTLRRLDFGGCRLSLAMSVDDEYSGPQCLQNSRIATSYPHLLKKYLDEQRVSFKSCLLNGSVEVAPRAGLADAICDLVSTGATLEANGLREVEVIYRSKACLIQRDGEMPANKQLLIDKLMTRIQGVIQARESKYIMLHAPSERLEEIITLLPGAERPTVLPLAGDKSRVAMHMVSSETLFWETMEKLKALGASSILVLPIEKMME.

Belongs to the ATP phosphoribosyltransferase family. Long subfamily. In terms of assembly, equilibrium between an active dimeric form, an inactive hexameric form and higher aggregates. Interconversion between the various forms is largely reversible and is influenced by the natural substrates and inhibitors of the enzyme. Mg(2+) serves as cofactor.

The protein resides in the cytoplasm. The catalysed reaction is 1-(5-phospho-beta-D-ribosyl)-ATP + diphosphate = 5-phospho-alpha-D-ribose 1-diphosphate + ATP. It functions in the pathway amino-acid biosynthesis; L-histidine biosynthesis; L-histidine from 5-phospho-alpha-D-ribose 1-diphosphate: step 1/9. Its activity is regulated as follows. Feedback inhibited by histidine. Its function is as follows. Catalyzes the condensation of ATP and 5-phosphoribose 1-diphosphate to form N'-(5'-phosphoribosyl)-ATP (PR-ATP). Has a crucial role in the pathway because the rate of histidine biosynthesis seems to be controlled primarily by regulation of HisG enzymatic activity. This Erwinia tasmaniensis (strain DSM 17950 / CFBP 7177 / CIP 109463 / NCPPB 4357 / Et1/99) protein is ATP phosphoribosyltransferase.